Consider the following 354-residue polypeptide: Probable L-ascorbate-6-phosphate lactonase UlaG (354 aa).

Belongs to the UlaG family. It depends on a divalent metal cation as a cofactor.

It localises to the cytoplasm. The catalysed reaction is L-ascorbate 6-phosphate + H2O = 3-dehydro-L-gulonate 6-phosphate. It participates in cofactor degradation; L-ascorbate degradation; D-xylulose 5-phosphate from L-ascorbate: step 1/4. In terms of biological role, probably catalyzes the hydrolysis of L-ascorbate-6-P into 3-keto-L-gulonate-6-P. Is essential for L-ascorbate utilization under anaerobic conditions. The protein is Probable L-ascorbate-6-phosphate lactonase UlaG of Escherichia coli O45:K1 (strain S88 / ExPEC).